The chain runs to 294 residues: uncharacterized protein (294 aa).

Residues L259–K294 are disordered. The segment covering R283–K294 has biased composition (basic residues).

This is an uncharacterized protein from Homo sapiens (Human).